We begin with the raw amino-acid sequence, 209 residues long: Superoxide dismutase [Mn/Fe] (209 aa).

Residues H38, H90, D172, and H176 each contribute to the Fe(3+) site. Mn(2+)-binding residues include H38, H90, D172, and H176.

It belongs to the iron/manganese superoxide dismutase family. The cofactor is Mn(2+). Fe(3+) serves as cofactor.

It catalyses the reaction 2 superoxide + 2 H(+) = H2O2 + O2. Its function is as follows. Destroys superoxide anion radicals which are normally produced within the cells and which are toxic to biological systems. Catalyzes the dismutation of superoxide anion radicals into O2 and H2O2 by successive reduction and oxidation of the transition metal ion at the active site. The sequence is that of Superoxide dismutase [Mn/Fe] (sodB) from Rickettsia prowazekii (strain Madrid E).